A 342-amino-acid polypeptide reads, in one-letter code: Dihydroorotase (342 aa).

Residues histidine 13 and histidine 15 each contribute to the Zn(2+) site. Substrate-binding positions include 15-17 (HLR) and asparagine 41. The Zn(2+) site is built by lysine 98, histidine 135, and histidine 173. Lysine 98 is subject to N6-carboxylysine. Histidine 135 is a substrate binding site. Leucine 218 provides a ligand contact to substrate. Aspartate 246 lines the Zn(2+) pocket. Aspartate 246 is an active-site residue. Histidine 250 and alanine 262 together coordinate substrate.

It belongs to the metallo-dependent hydrolases superfamily. DHOase family. Class II DHOase subfamily. Homodimer. It depends on Zn(2+) as a cofactor.

It carries out the reaction (S)-dihydroorotate + H2O = N-carbamoyl-L-aspartate + H(+). The protein operates within pyrimidine metabolism; UMP biosynthesis via de novo pathway; (S)-dihydroorotate from bicarbonate: step 3/3. Catalyzes the reversible cyclization of carbamoyl aspartate to dihydroorotate. This Vibrio vulnificus (strain CMCP6) protein is Dihydroorotase.